A 640-amino-acid polypeptide reads, in one-letter code: Autophagy-related protein 20 (640 aa).

Polar residues-rich tracts occupy residues 1–18 and 126–153; these read MSDLNDVQENAKLNSETR and AETCRTSLSGSINSMNGETSASEEPSVS. Disordered stretches follow at residues 1 to 63 and 126 to 156; these read MSDL…NNKV and AETCRTSLSGSINSMNGETSASEEPSVSNRK. N-acetylserine is present on S2. Residues 140-301 form the PX domain; the sequence is MNGETSASEE…DFLDPNNHNW (162 aa). A 1,2-diacyl-sn-glycero-3-phospho-(1D-myo-inositol-3-phosphate) is bound by residues R192, S194, K218, and R267. Residues S361 and S363 each carry the phosphoserine modification. 2 coiled-coil regions span residues 475 to 512 and 562 to 593; these read LQNEMIKKSLNSKRAQLEKLEAQNNEYKDVDKIIDNEM and TASINLKKEIEQLSESLEVTENDLEVISKVIK.

It belongs to the sorting nexin family. Forms a complex with SNX4 and ATG17.

It is found in the endosome membrane. The protein resides in the preautophagosomal structure membrane. Required for cytoplasm to vacuole transport (Cvt), pexophagy and mitophagy. Also involved in endoplasmic reticulum-specific autophagic process and is essential for the survival of cells subjected to severe ER stress. Functions in protein retrieval from the endocytic pathway. Required for proper sorting of the v-SNARE protein SNC1. In Saccharomyces cerevisiae (strain ATCC 204508 / S288c) (Baker's yeast), this protein is Autophagy-related protein 20 (ATG20).